The following is a 530-amino-acid chain: Ubiquitin carboxyl-terminal hydrolase 17-like protein 5 (530 aa).

In terms of domain architecture, USP spans 80–375 (AGLQNMGNTC…QAYVLFYIQK (296 aa)). Cys89 (nucleophile) is an active-site residue. The active-site Proton acceptor is the His334. Basic and acidic residues-rich tracts occupy residues 382-392 (SESVSRGREPR) and 398-412 (DTDR…KRDH). Disordered regions lie at residues 382–412 (SESV…KRDH) and 477–530 (NHHP…LVCQ). A compositionally biased stretch (polar residues) spans 493–505 (TPTHQESMNTGTL). The segment covering 510-524 (GRARRSKGKNKHSKR) has biased composition (basic residues).

Belongs to the peptidase C19 family. USP17 subfamily.

Its subcellular location is the nucleus. It is found in the endoplasmic reticulum. The enzyme catalyses Thiol-dependent hydrolysis of ester, thioester, amide, peptide and isopeptide bonds formed by the C-terminal Gly of ubiquitin (a 76-residue protein attached to proteins as an intracellular targeting signal).. Its function is as follows. Deubiquitinating enzyme that removes conjugated ubiquitin from specific proteins to regulate different cellular processes that may include cell proliferation, progression through the cell cycle, apoptosis, cell migration, and the cellular response to viral infection. This Homo sapiens (Human) protein is Ubiquitin carboxyl-terminal hydrolase 17-like protein 5 (USP17L5).